We begin with the raw amino-acid sequence, 680 residues long: Probable Xaa-Pro aminopeptidase P (680 aa).

Positions 477, 488, 586, and 600 each coordinate Mn(2+).

The protein belongs to the peptidase M24B family. The cofactor is Mn(2+).

It carries out the reaction Release of any N-terminal amino acid, including proline, that is linked to proline, even from a dipeptide or tripeptide.. Functionally, catalyzes the removal of a penultimate prolyl residue from the N-termini of peptides. The protein is Probable Xaa-Pro aminopeptidase P (AMPP) of Podospora anserina (strain S / ATCC MYA-4624 / DSM 980 / FGSC 10383) (Pleurage anserina).